A 110-amino-acid chain; its full sequence is Large ribosomal subunit protein uL22 (110 aa).

This sequence belongs to the universal ribosomal protein uL22 family. In terms of assembly, part of the 50S ribosomal subunit.

This protein binds specifically to 23S rRNA; its binding is stimulated by other ribosomal proteins, e.g. L4, L17, and L20. It is important during the early stages of 50S assembly. It makes multiple contacts with different domains of the 23S rRNA in the assembled 50S subunit and ribosome. Functionally, the globular domain of the protein is located near the polypeptide exit tunnel on the outside of the subunit, while an extended beta-hairpin is found that lines the wall of the exit tunnel in the center of the 70S ribosome. The sequence is that of Large ribosomal subunit protein uL22 from Salmonella arizonae (strain ATCC BAA-731 / CDC346-86 / RSK2980).